Consider the following 150-residue polypeptide: Large ribosomal subunit protein uL13 (150 aa).

Residues 130–150 (EHPHSAQNPQVLSITTNELVK) form a disordered region. Over residues 134-150 (SAQNPQVLSITTNELVK) the composition is skewed to polar residues.

This sequence belongs to the universal ribosomal protein uL13 family. As to quaternary structure, part of the 50S ribosomal subunit.

Its function is as follows. This protein is one of the early assembly proteins of the 50S ribosomal subunit, although it is not seen to bind rRNA by itself. It is important during the early stages of 50S assembly. This is Large ribosomal subunit protein uL13 from Prochlorococcus marinus (strain SARG / CCMP1375 / SS120).